The chain runs to 77 residues: Acyl carrier protein (77 aa).

In terms of domain architecture, Carrier spans 1–76 (MADFEKVKSI…DVTKFIDNLK (76 aa)). At Ser36 the chain carries O-(pantetheine 4'-phosphoryl)serine.

The protein belongs to the acyl carrier protein (ACP) family. 4'-phosphopantetheine is transferred from CoA to a specific serine of apo-ACP by AcpS. This modification is essential for activity because fatty acids are bound in thioester linkage to the sulfhydryl of the prosthetic group.

The protein resides in the cytoplasm. It functions in the pathway lipid metabolism; fatty acid biosynthesis. Functionally, carrier of the growing fatty acid chain in fatty acid biosynthesis. The sequence is that of Acyl carrier protein from Leptospira borgpetersenii serovar Hardjo-bovis (strain JB197).